The sequence spans 131 residues: MSWQAYVDEHLMCEIEGHHLASAAILGHDGTVWAQSADFPQFKPEEITGIMKDFDEPGHLAPTGMFVAAAKYMVIQGEPGAVIRGKKGAGGITIKKTGQALVVGIYDEPMTPGQCNMVVERLGDYLLKQGL.

A disulfide bridge links Cys13 with Cys115. An Involved in PIP2 interaction motif is present at residues 81–97 (AVIRGKKGAGGITIKKT). The residue at position 111 (Thr111) is a Phosphothreonine.

The protein belongs to the profilin family. Occurs in many kinds of cells as a complex with monomeric actin in a 1:1 ratio. Phosphorylated by MAP kinases.

It is found in the cytoplasm. The protein resides in the cytoskeleton. In terms of biological role, binds to actin and affects the structure of the cytoskeleton. At high concentrations, profilin prevents the polymerization of actin, whereas it enhances it at low concentrations. The polypeptide is Profilin-8 (Phleum pratense (Common timothy)).